Consider the following 597-residue polypeptide: Sodium/mannose cotransporter SLC5A10 (597 aa).

The Extracellular portion of the chain corresponds to 1–16 (MAVDNSTSDAHTPGRQ). N-linked (GlcNAc...) asparagine glycosylation is present at Asn-5. A helical transmembrane segment spans residues 17–37 (LTVVDIAIIAVYFALNVAVGI). Residues 38 to 73 (WSSCRASRNTVRGYFLAGRDMTWWPIGASLFASSEG) lie on the Cytoplasmic side of the membrane. A helical transmembrane segment spans residues 74-94 (SGLFIGLAGSGAAGGLAVAGF). The Extracellular portion of the chain corresponds to 95 to 100 (EWNATY). A glycan (N-linked (GlcNAc...) asparagine) is linked at Asn-97. Residues 101 to 121 (VLLALAWVFVPIYLSSEIVTM) form a helical membrane-spanning segment. The Cytoplasmic segment spans residues 122-139 (PEYMQKRYGGQRIRMYLS). A helical transmembrane segment spans residues 140–162 (VLSLLLSVFTKISIDLYAGALFV). Residues 163–174 (HICLGWNFYLST) lie on the Extracellular side of the membrane. The helical transmembrane segment at 175-195 (VIMLAITALYTIAGGLTAVIY) threads the bilayer. The Cytoplasmic segment spans residues 196-201 (TDALQT). The chain crosses the membrane as a helical span at residues 202-222 (LVMVAGAVILTIKAFEQIGGY). At 223 to 265 (EQLAEAYAQAVPSRTISNTTCHVPRADAMHMFRDPYTADLPWT) the chain is on the extracellular side. Residues 266–286 (GMTFGLTIMAAWYWCTDQVIV) traverse the membrane as a helical segment. Topologically, residues 287-301 (QRSLSARDLNHAKGG) are cytoplasmic. A helical transmembrane segment spans residues 302–322 (SILASYLKMLPMGLMVMPGMI). Over 323-367 (SRVLFPDDVGCVVPAECLRACGAEIGCSNIAYPKLVMELMPTGLR) the chain is Extracellular. The chain crosses the membrane as a helical span at residues 368–388 (GLMVAVMMAALMSSLTSIFNS). At 389 to 410 (SSTLFTMDIWRRLRPRAGEREL) the chain is on the cytoplasmic side. The helical transmembrane segment at 411–431 (LLVGRLVIVVLVGVSVAWIPV) threads the bilayer. At 432 to 444 (LQGSNGGQLFIYM) the chain is on the extracellular side. A helical transmembrane segment spans residues 445-465 (QSVTSSLAPPVTAVFVLGIFW). Topologically, residues 466-472 (RRANEQG) are cytoplasmic. A helical transmembrane segment spans residues 473-493 (AFWGLMAGLAVGATRLVLEFL). At 494-514 (HPAPPCGHPDTRPPILHGVHY) the chain is on the extracellular side. The chain crosses the membrane as a helical span at residues 515 to 535 (LHFAVALFLLSGAVVVAGSLL). Over 536 to 576 (TPHPQGVQIQSLTWWTLAQDLPLGVKTGDGRASQRHAFWAR) the chain is Cytoplasmic. A helical membrane pass occupies residues 577 to 597 (VCGVNAILLMCVNIFFYTYFA).

The protein belongs to the sodium:solute symporter (SSF) (TC 2.A.21) family. Predominantyl expressed in kidney. Also detected at very low levels in testes, skeletal muscle, and spleen.

The protein resides in the apical cell membrane. It carries out the reaction D-mannose(out) + Na(+)(out) = D-mannose(in) + Na(+)(in). It catalyses the reaction D-fructopyranose(out) + Na(+)(out) = D-fructopyranose(in) + Na(+)(in). Electrogenic Na+-coupled sugar symporter that actively transports D-mannose or D-fructose at the plasma membrane, with a Na+ to sugar coupling ratio of 1:1. Transporter activity is driven by a transmembrane Na+ electrochemical gradient set by the Na+/K+ pump. Exclusively recognizes sugar substrates having a pyranose ring with an axial hydroxyl group on carbon 2. Has likely evolved to enable renal reabsorption of D-mannose, an important constituent of oligosaccharide chains of glycoproteins. Contributes to dietary D-fructose reabsorption from glomerular filtrate across the brush border of the kidney. This Bos taurus (Bovine) protein is Sodium/mannose cotransporter SLC5A10 (SLC5A10).